The primary structure comprises 155 residues: Ribosomal RNA large subunit methyltransferase H (155 aa).

Residues leucine 72, glycine 103, and 122–127 (LSPLTL) contribute to the S-adenosyl-L-methionine site.

This sequence belongs to the RNA methyltransferase RlmH family. As to quaternary structure, homodimer.

The protein resides in the cytoplasm. The enzyme catalyses pseudouridine(1915) in 23S rRNA + S-adenosyl-L-methionine = N(3)-methylpseudouridine(1915) in 23S rRNA + S-adenosyl-L-homocysteine + H(+). Functionally, specifically methylates the pseudouridine at position 1915 (m3Psi1915) in 23S rRNA. In Actinobacillus pleuropneumoniae serotype 3 (strain JL03), this protein is Ribosomal RNA large subunit methyltransferase H.